The chain runs to 278 residues: Putative ABC transporter ATP-binding protein MJ1572 (278 aa).

The 238-residue stretch at 5–242 (YRLVDVSYKY…LDELNLDVPE (238 aa)) folds into the ABC transporter domain. 38–45 (GPNGAGKT) contributes to the ATP binding site.

It belongs to the ABC transporter superfamily.

It localises to the cell membrane. Its function is as follows. Probably part of an ABC transporter complex. Responsible for energy coupling to the transport system. This Methanocaldococcus jannaschii (strain ATCC 43067 / DSM 2661 / JAL-1 / JCM 10045 / NBRC 100440) (Methanococcus jannaschii) protein is Putative ABC transporter ATP-binding protein MJ1572.